Consider the following 80-residue polypeptide: Protein pegasus (80 aa).

The first 22 residues, 1 to 22 (MKLSAVLLAIALLALSLVQCLG), serve as a signal peptide directing secretion. The Kazal-like domain maps to 24-80 (PDPSTKCVMECDTQEYRSICAADDKGSTKTYRNLCVMKTENCLQNANFQKISDKECP). Disulfide bonds link cysteine 30/cysteine 65, cysteine 34/cysteine 58, and cysteine 43/cysteine 79.

In terms of assembly, interacts with wg; the interaction facilitates short-range diffusion of wg. As to expression, strongly expressed in the developing fly wing but is excluded from the presumptive wing margin.

Its subcellular location is the secreted. In terms of biological role, increases short-range diffusion of the wingless/wg protein, enhancing its signaling and expression of target genes required for wing margin morphogenesis. May act as a serine protease inhibitor since it possess the Kazal serine protease inhibitor signature. This is Protein pegasus from Drosophila melanogaster (Fruit fly).